The following is a 500-amino-acid chain: Putative DNA recombinase (500 aa).

The 144-residue stretch at 1-144 folds into the Resolvase/invertase-type recombinase catalytic domain; it reads MIAIYVRVST…SGRLQKMKKG (144 aa). S9 functions as the O-(5'-phospho-DNA)-serine intermediate in the catalytic mechanism. The recombinase DNA-binding region spans 152–288; sequence LYGYKFVKEK…QELLGQSKRK (137 aa). Residues 372-448 adopt a coiled-coil conformation; the sequence is KEAEQSNHLS…IQSKMKVLDD (77 aa).

In the N-terminal section; belongs to the site-specific recombinase resolvase family.

Functionally, putative site-specific recombinase having a very important role in sporulation. It probably plays a role in the recombination of SpoIIIC and SpoIVCB to form sigma K factor. The protein is Putative DNA recombinase (cisA) of Bacillus subtilis (strain 168).